Here is a 260-residue protein sequence, read N- to C-terminus: Carbonic anhydrase 2 (260 aa).

Ser-2 is modified (N-acetylserine). Ser-2 is subject to Phosphoserine. Residues 3 to 259 (HHWGYGEHNG…LKNRQVRVFP (257 aa)) form the Alpha-carbonic anhydrase domain. The active-site Proton donor/acceptor is His-64. Residues His-94, His-96, and His-119 each coordinate Zn(2+). Residues Ser-165 and Ser-172 each carry the phosphoserine modification. A substrate-binding site is contributed by 198–199 (TN).

It belongs to the alpha-carbonic anhydrase family. In terms of assembly, interacts with SLC4A4 and SLC26A6. Interaction with SLC4A7 regulates SLC4A7 transporter activity. It depends on Zn(2+) as a cofactor.

Its subcellular location is the cytoplasm. It localises to the cell membrane. It carries out the reaction hydrogencarbonate + H(+) = CO2 + H2O. It catalyses the reaction urea = cyanamide + H2O. Inhibited by acetazolamide. Its function is as follows. Catalyzes the reversible hydration of carbon dioxide. Can also hydrate cyanamide to urea. Involved in the regulation of fluid secretion into the anterior chamber of the eye. Essential for bone resorption and osteoclast differentiation. Contributes to intracellular pH regulation in the duodenal upper villous epithelium during proton-coupled peptide absorption. Stimulates the chloride-bicarbonate exchange activity of SLC26A6. In Ovis aries (Sheep), this protein is Carbonic anhydrase 2 (CA2).